Reading from the N-terminus, the 317-residue chain is Putative toluene-4-sulfonate monooxygenase system reductase subunit TsaB2 (317 aa).

Positions 4-106 (DVPVTVAAVR…SAPRNLFEMA (103 aa)) constitute an FAD-binding FR-type domain. 110–220 (RRVLLLAGGI…PGSVRMERFK (111 aa)) is an NAD(+) binding site. Residues 232-317 (FELVLQRAGL…CGGGRLVLDI (86 aa)) form the 2Fe-2S ferredoxin-type domain. [2Fe-2S] cluster contacts are provided by Cys-266, Cys-271, and Cys-274.

Monomer. Part of the p-toluenesulfonate methyl-monooxygenase complex TsaBM, comprising the reductase TsaB and the oxygenase TsaM. The cofactor is FMN.

Functionally, involved in the toluene-4-sulfonate degradation pathway. The polypeptide is Putative toluene-4-sulfonate monooxygenase system reductase subunit TsaB2 (tsaB2) (Comamonas testosteroni (Pseudomonas testosteroni)).